A 418-amino-acid polypeptide reads, in one-letter code: Sterigmatocystin 8-O-methyltransferase (418 aa).

The propeptide occupies 1–41; sequence MTLPNKAALVGLAHTLSEQVKRYLVTADETKSPEDHKLCIE. 170–176 contacts substrate; that stretch reads MRSAAYF. The interval 206–225 is substrate binding; it reads LFDYYSTVDEVRGRRFDLGM. Residues 254–255, Asp277, 297–298, and Arg313 each bind S-adenosyl-L-methionine; these read GG and DI. The active-site Proton acceptor is His317.

The protein belongs to the class I-like SAM-binding methyltransferase superfamily. Cation-independent O-methyltransferase family. COMT subfamily.

The catalysed reaction is sterigmatocystin + S-adenosyl-L-methionine = 8-O-methylsterigmatocystin + S-adenosyl-L-homocysteine + H(+). It catalyses the reaction dihydrosterigmatocystin + S-adenosyl-L-methionine = 8-O-methyldihydrosterigmatocystin + S-adenosyl-L-homocysteine + H(+). It participates in mycotoxin biosynthesis; aflatoxin biosynthesis. Functionally, involved in the conversion of sterigmatocystin to O-methylsterigmatocystin (OMST) and dihydrosterigmatocystin to dihydro-o-methylsterigmatocystin in the aflatoxin biosynthesis pathway. In Aspergillus flavus (strain ATCC 200026 / FGSC A1120 / IAM 13836 / NRRL 3357 / JCM 12722 / SRRC 167), this protein is Sterigmatocystin 8-O-methyltransferase (omtA).